Consider the following 67-residue polypeptide: ATP synthase F(0) complex subunit 8 (67 aa).

Residues 8–24 (TWLIMISSMILTLFITF) traverse the membrane as a helical segment. Lys-54 is subject to N6-acetyllysine; alternate. Lys-54 is modified (N6-succinyllysine; alternate). An N6-acetyllysine modification is found at Lys-57.

Belongs to the ATPase protein 8 family. As to quaternary structure, component of the ATP synthase complex composed at least of ATP5F1A/subunit alpha, ATP5F1B/subunit beta, ATP5MC1/subunit c (homooctomer), MT-ATP6/subunit a, MT-ATP8/subunit 8, ATP5ME/subunit e, ATP5MF/subunit f, ATP5MG/subunit g, ATP5MK/subunit k, ATP5MJ/subunit j, ATP5F1C/subunit gamma, ATP5F1D/subunit delta, ATP5F1E/subunit epsilon, ATP5PF/subunit F6, ATP5PB/subunit b, ATP5PD/subunit d, ATP5PO/subunit OSCP. ATP synthase complex consists of a soluble F(1) head domain (subunits alpha(3) and beta(3)) - the catalytic core - and a membrane F(0) domain - the membrane proton channel (subunits c, a, 8, e, f, g, k and j). These two domains are linked by a central stalk (subunits gamma, delta, and epsilon) rotating inside the F1 region and a stationary peripheral stalk (subunits F6, b, d, and OSCP). Interacts with PRICKLE3.

It localises to the mitochondrion membrane. Functionally, subunit 8, of the mitochondrial membrane ATP synthase complex (F(1)F(0) ATP synthase or Complex V) that produces ATP from ADP in the presence of a proton gradient across the membrane which is generated by electron transport complexes of the respiratory chain. ATP synthase complex consist of a soluble F(1) head domain - the catalytic core - and a membrane F(1) domain - the membrane proton channel. These two domains are linked by a central stalk rotating inside the F(1) region and a stationary peripheral stalk. During catalysis, ATP synthesis in the catalytic domain of F(1) is coupled via a rotary mechanism of the central stalk subunits to proton translocation. In vivo, can only synthesize ATP although its ATP hydrolase activity can be activated artificially in vitro. Part of the complex F(0) domain. The protein is ATP synthase F(0) complex subunit 8 of Halichoerus grypus (Gray seal).